A 278-amino-acid chain; its full sequence is Envelope glycoprotein L (278 aa).

Residues 1-30 (MCRRPDCGFSFSPGPVVLLWCCLLLPIVSS) form the signal peptide. A gL betaherpesvirus-type domain is found at 43-256 (VPAECPELTR…DKYYAGLPPE (214 aa)). Cysteines 154 and 159 form a disulfide.

This sequence belongs to the herpesviridae glycoprotein L (gL) family. Betaherpesvirinae gL subfamily. Interacts with glycoprotein H (gH); this interaction is necessary for the correct processing and cell surface expression of gH. Forms the envelope pentamer complex (PC) composed of gH, gL, UL128, UL130, and UL131A. The pentamer interacts with host NRP2. Forms the envelope trimer complex composed of gH, gL, and gO. The trimer interacts with host PDGFRA.

It is found in the virion membrane. It localises to the host cell membrane. The protein resides in the host Golgi apparatus. Its subcellular location is the host trans-Golgi network. In terms of biological role, the heterodimer glycoprotein H-glycoprotein L is required for the fusion of viral and plasma membranes leading to virus entry into the host cell. Acts as a functional inhibitor of gH and maintains gH in an inhibited form. Upon binding to host integrins, gL dissociates from gH leading to activation of the viral fusion glycoproteins gB and gH. In human cytomegalovirus, forms two distincts complexes to mediate viral entry, a trimer and a pentamer at the surface of the virion envelope. The gH-gL-gO trimer is required for infection in fibroblasts by interacting with host PDGFRA. The gH-gL-UL128-UL130-UL131A pentamer is essential for viral entry in epithelial, endothelial and myeloid cells via interaction with host NRP2. The protein is Envelope glycoprotein L of Human cytomegalovirus (strain AD169) (HHV-5).